Reading from the N-terminus, the 332-residue chain is Long form salivary protein D7L1 (332 aa).

The N-terminal stretch at 1–21 (MHSPKSFLLLAVVFVALRVTA) is a signal peptide. Cystine bridges form between C40-C77 and C73-C133. W61 is a binding site for leukotriene E4. Residue K176 coordinates leukotriene E4. Cystine bridges form between C184/C219, C200/C331, and C259/C278. Residues E185 and R203 each coordinate noradrenaline. Noradrenaline contacts are provided by D294 and E297.

The protein belongs to the PBP/GOBP family. As to expression, female mosquito salivary gland (at protein level).

It is found in the secreted. Functionally, modulates blood feeding of female mosquitoes on vertebrate species by binding and sequestering different mediators involved in the host response, such as biogenic amines and eicosanoids. Binds dopamine, serotonin, histamine, tryptamine, adrenaline, noradrenaline, leukotriene B4, leukotriene C4, leukotriene D4, leukotriene E4 and U-46619, a stable analog of thromboxane A2. Inhibits platelet aggregation induced by serotonin and low doses of thromboxane A2 analog U-46619 but not by high doses of U-46619, collagen or ADP. Prevents leukocyte recruitment. The chain is Long form salivary protein D7L1 from Aedes albopictus (Asian tiger mosquito).